A 771-amino-acid polypeptide reads, in one-letter code: MTAPEQPVKQEEMAALDVDSSGHGEYLQHGNGNASASAAAAAPQDAQPSPLALLAATCSKIGPPSPEEDEAAAAAASHSAGATGDLASVQLAGTPNRWEVLSAAPATIKDEAGNIVQIPGAATVTSSGQYVLPIQSLQNQQIFSVAPGSDSSNGTVSNVQYQVIPQIQTADGQQVQLGFAASSDNSSINQETGQIQIIPGSNQTIIASGSPSANIQNILSQSGQVQVQGVAIGGSSFPGQAQVVANVPLGLPGNITFVPINSVDLDSLGLGSGSQTMTAGINADGHLINTGQAMDSSDNSERTGEQVSPEITETATDNDLFVPTSSSSQLPVTIDSSSILEQNANNLTTTSGQVHSSDLQGNYIQTSVSDDTQAQNIQVSTAQPIVQHIQLQESQQPTSQAQIVQGIAQQTIHGVQASQSISPQALQNLQLQLNPGTFLIQAQTVTPSGQITWQTFQVQGVQNLQNLQIQNAPGQQITLTPVQTLTLGQVAAGGALTSTPVSLSTAQLPNLQTVTVNSIDSAGIQLHQGENAGSPADIRIKEEEPDPEEWQLSGDSTLNTNDLTHLRVQVVDEEGDQPHQEGKRLRRVACTCPNCKEGGGRGSNLGKKKQHICHIPGCGKVYGKTSHLRAHLRWHSGERPFVCNWMFCGKRFTRSDELQRHRRTHTGEKKFVCPECSKRFMRSDHLAKHIKTHQNKKGIHSSSTVLASVEATSDDTLITAGGTTLILANIQQGSVSGIGTVNTSGTSNQDILTNTEIPLQLVTVSGNETME.

Disordered regions lie at residues 1–47 and 60–79; these read MTAP…QDAQ and KIGPPSPEEDEAAAAAASHS. A compositionally biased stretch (low complexity) spans 34–47; the sequence is ASASAAAAAPQDAQ. Residue K109 forms a Glycyl lysine isopeptide (Lys-Gly) (interchain with G-Cter in SUMO) linkage. Transactivation domain (Gln-rich) regions lie at residues 129-228 and 341-489; these read QYVL…VQVQ and EQNA…TLGQ. The short motif at 451–459 is the 9aaTAD element; the sequence is ITWQTFQVQ. Residues 524 to 610 form a repressor domain region; sequence IQLHQGENAG…RGSNLGKKKQ (87 aa). The residue at position 541 (K541) is an N6-acetyllysine; alternate. Residue K541 forms a Glycyl lysine isopeptide (Lys-Gly) (interchain with G-Cter in SUMO); alternate linkage. 3 consecutive C2H2-type zinc fingers follow at residues 611–635, 641–665, and 671–693; these read HICHIPGCGKVYGKTSHLRAHLRWH, FVCNWMFCGKRFTRSDELQRHRRTH, and FVCPECSKRFMRSDHLAKHIKTH.

This sequence belongs to the Sp1 C2H2-type zinc-finger protein family. In terms of assembly, interacts with HDAC1 and HDAC2; the interaction deacetylates SP3 and regulates its transcriptional activity. Interacts with v-Jun. Post-translationally, acetylated by histone acetyltransferase p300, deacetylated by HDACs. Acetylation/deacetylation states regulate transcriptional activity. Acetylation appears to activate transcription. Alternate sumoylation and acetylation at Lys-541 also control transcriptional activity. Sumoylation represses transcriptional activity. Lys-541 is the major site. Sumoylation at this site promotes nuclear localization to the nuclear periphery, nuclear dots and PML nuclear bodies. Alternate sumoylation and acetylation at Lys-541 also control transcriptional activity.

It is found in the nucleus. It localises to the PML body. Functionally, transcriptional factor that can act as an activator or repressor depending on post-translational modifications. Binds to GT and GC boxes promoter elements. Competes with SP1 for the GC-box promoters. Weak activator of transcription. Required for activation of SPARC transcription. The protein is Transcription factor Sp3 (SP3) of Gallus gallus (Chicken).